Consider the following 257-residue polypeptide: Leucine-rich repeat-containing protein 3 (257 aa).

Positions 1-32 (MGPRGRQSPSSPLAPSQGSCFFILFCLRLGAS) are cleaved as a signal peptide. The 32-residue stretch at 33-64 (CPQSCQCPDHAGAVAVHCSSRGLQEIPRDIPA) folds into the LRRNT domain. LRR repeat units follow at residues 65 to 86 (NTVL…AFQH), 89 to 110 (QLRE…AFSG), and 114 to 135 (GLRL…ALGK). Positions 145-198 (NPLHCECALQEALWELKLDPDSVDEIACHTSAQEQFVGKPLIQVLDSGASFCST) constitute an LRRCT domain. The chain crosses the membrane as a helical span at residues 205–225 (VAMLVTMFGWFTMVIAYVVYY).

The protein belongs to the LRRC3 family.

It localises to the membrane. The protein is Leucine-rich repeat-containing protein 3 (Lrrc3) of Rattus norvegicus (Rat).